Reading from the N-terminus, the 367-residue chain is Auxin efflux carrier component 8 (367 aa).

Residues 1 to 6 are Extracellular-facing; sequence MISWLD. Residues 7–27 form a helical membrane-spanning segment; sequence IYHVVSATVPLYVSMTLGFLS. Over 28–38 the chain is Cytoplasmic; that stretch reads ARHLKLFSPEQ. A helical membrane pass occupies residues 39–59; sequence CAGINKFVAKFSIPLLSFQII. A (indol-3-yl)acetate-binding site is contributed by isoleucine 51. Over 60-69 the chain is Extracellular; that stretch reads SENNPFKMSP. A helical membrane pass occupies residues 70–90; it reads KLILSDILQKFLVVVVLAMVL. Residues 91–105 lie on the Cytoplasmic side of the membrane; it reads RFWHPTGGRGGKLGW. The helical transmembrane segment at 106 to 126 threads the bilayer; it reads VITGLSISVLPNTLILGMPIL. Asparagine 117 and leucine 119 together coordinate (indol-3-yl)acetate. The Extracellular portion of the chain corresponds to 127 to 136; it reads SAIYGDEAAS. The chain crosses the membrane as a helical span at residues 137–157; sequence ILEQIVVLQSLIWYTILLFLF. Tyrosine 150 is a (indol-3-yl)acetate binding site. Topologically, residues 158–227 are cytoplasmic; that stretch reads ELNAARALPS…LIINPNTYAT (70 aa). Residues 168–194 form a disordered region; it reads SGASLEHTGNDQEEANIEDEPKEEEDE. Residues 178–194 are compositionally biased toward acidic residues; the sequence is DQEEANIEDEPKEEEDE. The chain crosses the membrane as a helical span at residues 228 to 248; the sequence is LIGIIWATLHFRLGWNLPEMI. Residues 249–251 lie on the Extracellular side of the membrane; the sequence is DKS. A helical membrane pass occupies residues 252–272; it reads IHLLSDGGLGMAMFSLGLFMA. At 273–288 the chain is on the cytoplasmic side; that stretch reads SQSSIIACGTKMAIIT. Residues 289-309 form a helical membrane-spanning segment; the sequence is MLLKFVLGPALMIASAYCIRL. Residues 310 to 312 lie on the Extracellular side of the membrane; the sequence is KST. The helical transmembrane segment at 313-333 threads the bilayer; sequence LFKVAILQAALPQGVVPFVFA. Valine 327 and valine 328 together coordinate (indol-3-yl)acetate. Residues 334-344 are Cytoplasmic-facing; sequence KEYNLHPEIIS. A helical membrane pass occupies residues 345 to 365; that stretch reads TGVIFGMLIALPTTLAYYFLL. The Extracellular portion of the chain corresponds to 366-367; sequence DL.

Belongs to the auxin efflux carrier (TC 2.A.69.1) family. In terms of assembly, homodimer. Expressed in veins of mature leaves. Strongly expressed in pollen.

Its subcellular location is the endoplasmic reticulum membrane. It localises to the cell membrane. Its activity is regulated as follows. Auxin efflux carrier activity is competitively inhibited by naptalamate (N-1-naphthylphthalamic acid, NPA). Its function is as follows. Acts as a component of the auxin efflux carrier. Component of the intracellular auxin-transport pathway in the male gametophyte. Involved in the regulation of auxin homeostasis in pollen. Involved in the efflux of auxin from the endoplasmic reticulum into the cytoplasm. Binds auxins including indole-3-acetic acid (IAA), naphthaleneacetic acid (NAA) and the herbicide 2,4-dichlorophenoxyacetic acid (2,4-D), but barely indole-3-butyric acid (IBA) and 2-phenylacetic acid (PAA). PIN5 and PIN8 may have an antagonistic/compensatory activity. Involved in the control of vein patterning. Redundantly with PIN6, inhibits the vein-formation-promoting functions of PIN5. PIN5, PIN6, and PIN8 control vein network geometry, but they are expressed in mutually exclusive domains of leaf vascular cells. The sequence is that of Auxin efflux carrier component 8 from Arabidopsis thaliana (Mouse-ear cress).